A 177-amino-acid chain; its full sequence is MKQKLQALDRAIKRFNDFPTPGILFYDITPIFLNSELFEFVLEQMAQFIQEVKADGIVCPEARGFIFGGALASKTKLPLVLVRKPHKLSGELARETYDLEYRQNSILEMRVDALENCKRCVIVDDLLATAGTVAAIDKLIARLGSQTVGYCFLIELQKLHGKAKLQPNVATKILLHY.

The protein belongs to the purine/pyrimidine phosphoribosyltransferase family. Homodimer.

It localises to the cytoplasm. It catalyses the reaction AMP + diphosphate = 5-phospho-alpha-D-ribose 1-diphosphate + adenine. The protein operates within purine metabolism; AMP biosynthesis via salvage pathway; AMP from adenine: step 1/1. Functionally, catalyzes a salvage reaction resulting in the formation of AMP, that is energically less costly than de novo synthesis. This is Adenine phosphoribosyltransferase from Mycoplasma pneumoniae (strain ATCC 29342 / M129 / Subtype 1) (Mycoplasmoides pneumoniae).